Here is a 373-residue protein sequence, read N- to C-terminus: Nodulation protein NolL (373 aa).

9 helical membrane-spanning segments follow: residues 27-47, 62-82, 98-118, 140-160, 164-184, 212-232, 253-273, 286-306, and 324-344; these read DFAK…QYLI, SIYM…SSGA, QLLL…SAVI, WFIW…TFNR, WIIS…SITP, RYKW…FLGW, QVFL…QSMF, RFVA…QGAV, and RITF…AIRS.

This sequence belongs to the acyltransferase 3 family.

It is found in the cell membrane. Its function is as follows. Thought to be an acetyltransferase that modifies the fucose of the nod factor. This chain is Nodulation protein NolL (nolL), found in Mesorhizobium japonicum (strain LMG 29417 / CECT 9101 / MAFF 303099) (Mesorhizobium loti (strain MAFF 303099)).